The chain runs to 663 residues: Beta-galactosidase YesZ (663 aa).

Arginine 107 is a binding site for substrate. Position 111 (cysteine 111) interacts with Zn(2+). Asparagine 145 serves as a coordination point for substrate. Catalysis depends on glutamate 146, which acts as the Proton donor. Zn(2+) is bound by residues cysteine 154, cysteine 156, and cysteine 159. Residue glutamate 297 is the Nucleophile of the active site. Position 346-349 (346-349 (EQPH)) interacts with substrate.

The protein belongs to the glycosyl hydrolase 42 family. In terms of assembly, homotrimer.

It carries out the reaction Hydrolysis of terminal non-reducing beta-D-galactose residues in beta-D-galactosides.. Its function is as follows. May play a role in the degradation of rhamnogalacturonan derived from plant cell walls. The sequence is that of Beta-galactosidase YesZ (yesZ) from Bacillus licheniformis (strain ATCC 14580 / DSM 13 / JCM 2505 / CCUG 7422 / NBRC 12200 / NCIMB 9375 / NCTC 10341 / NRRL NRS-1264 / Gibson 46).